The primary structure comprises 739 residues: Pre-mRNA-splicing factor ATP-dependent RNA helicase ddx-15 (739 aa).

Positions 1–19 (MSSRHRLDLDGSGRGDRRR) are enriched in basic and acidic residues. The segment at 1-49 (MSSRHRLDLDGSGRGDRRRSPNRRSRSRSRSPHRRSSPDRKRQIGAVGN) is disordered. The span at 20 to 35 (SPNRRSRSRSRSPHRR) shows a compositional bias: basic residues. A Helicase ATP-binding domain is found at 86–257 (MELLRNNQCI…FEDCPLLSVP (172 aa)). 99–106 (GETGSGKT) serves as a coordination point for ATP. The DEAH box signature appears at 204–207 (DEAH). One can recognise a Helicase C-terminal domain in the interval 282–462 (TVIQIHMVEE…SVVLQLKKLG (181 aa)).

The protein belongs to the DEAD box helicase family. DEAH subfamily. DDX15/PRP43 sub-subfamily.

The protein localises to the nucleus. It catalyses the reaction ATP + H2O = ADP + phosphate + H(+). In terms of biological role, pre-mRNA processing factor involved in disassembly of spliceosomes after the release of mature mRNA. The sequence is that of Pre-mRNA-splicing factor ATP-dependent RNA helicase ddx-15 from Caenorhabditis elegans.